The following is a 423-amino-acid chain: UDP-N-acetylglucosamine 1-carboxyvinyltransferase 2 (423 aa).

23 to 24 (KN) is a phosphoenolpyruvate binding site. UDP-N-acetyl-alpha-D-glucosamine is bound at residue arginine 96. Cysteine 120 acts as the Proton donor in catalysis. Cysteine 120 carries the post-translational modification 2-(S-cysteinyl)pyruvic acid O-phosphothioketal. UDP-N-acetyl-alpha-D-glucosamine is bound by residues 125-129 (RPIDL), aspartate 309, and valine 331.

It belongs to the EPSP synthase family. MurA subfamily.

It localises to the cytoplasm. The enzyme catalyses phosphoenolpyruvate + UDP-N-acetyl-alpha-D-glucosamine = UDP-N-acetyl-3-O-(1-carboxyvinyl)-alpha-D-glucosamine + phosphate. The protein operates within cell wall biogenesis; peptidoglycan biosynthesis. Its function is as follows. Cell wall formation. Adds enolpyruvyl to UDP-N-acetylglucosamine. In Streptococcus agalactiae serotype Ia (strain ATCC 27591 / A909 / CDC SS700), this protein is UDP-N-acetylglucosamine 1-carboxyvinyltransferase 2.